Reading from the N-terminus, the 208-residue chain is Uracil phosphoribosyltransferase (208 aa).

5-phospho-alpha-D-ribose 1-diphosphate contacts are provided by residues Arg78, Arg103, and 130–138 (DPMLATGGS). Uracil-binding positions include Ile193 and 198-200 (GDA). Asp199 is a binding site for 5-phospho-alpha-D-ribose 1-diphosphate.

This sequence belongs to the UPRTase family. Mg(2+) is required as a cofactor.

The enzyme catalyses UMP + diphosphate = 5-phospho-alpha-D-ribose 1-diphosphate + uracil. It functions in the pathway pyrimidine metabolism; UMP biosynthesis via salvage pathway; UMP from uracil: step 1/1. Its activity is regulated as follows. Allosterically activated by GTP. In terms of biological role, catalyzes the conversion of uracil and 5-phospho-alpha-D-ribose 1-diphosphate (PRPP) to UMP and diphosphate. This is Uracil phosphoribosyltransferase from Shewanella sp. (strain ANA-3).